The chain runs to 375 residues: Putative actin-26 (375 aa).

This sequence belongs to the actin family.

It is found in the cytoplasm. The protein resides in the cytoskeleton. It carries out the reaction ATP + H2O = ADP + phosphate + H(+). Its function is as follows. Actins are highly conserved proteins that are involved in various types of cell motility and are ubiquitously expressed in all eukaryotic cells. Multiple isoforms are involved in various cellular functions such as cytoskeleton structure, cell mobility, chromosome movement and muscle contraction. The polypeptide is Putative actin-26 (act26) (Dictyostelium discoideum (Social amoeba)).